A 241-amino-acid chain; its full sequence is CD99 antigen-like protein 2 (241 aa).

The first 23 residues, M1–G23, serve as a signal peptide directing secretion. Residues D24–G173 are Extracellular-facing. Positions D30–S168 are disordered. The segment covering G143–T154 has biased composition (gly residues). A helical membrane pass occupies residues T174–Y196. Over Q197 to P241 the chain is Cytoplasmic.

Belongs to the CD99 family.

The protein localises to the cell membrane. The protein resides in the cell junction. Its function is as follows. May function as a homophilic adhesion molecule. The chain is CD99 antigen-like protein 2 (cd99l2) from Xenopus tropicalis (Western clawed frog).